We begin with the raw amino-acid sequence, 351 residues long: Ubiquinol oxidase 4, chloroplastic/chromoplastic (351 aa).

Residues 1-56 (MAAISGISSGTLTISRPLVTLRRSRAAVSYSSSHRLLHHLPLSSRRLLLRNNHRVQ) constitute a chloroplast and chromoplast transit peptide. Residues 71–91 (ESFKAETSTGTEPLEEPNMSS) are disordered. Residues 132–152 (FFVLETIARVPYFAFMSVLHM) traverse the membrane as a helical segment. Residues Glu136, Glu175, and His178 each coordinate Fe cation. The chain crosses the membrane as a helical span at residues 195 to 215 (FLAQHIATFYYFMTVFLYILS). Positions 227, 296, and 299 each coordinate Fe cation.

The protein belongs to the alternative oxidase family. Fe cation is required as a cofactor. As to expression, ubiquitous.

Its subcellular location is the plastid. It is found in the chloroplast thylakoid membrane. It localises to the chromoplast membrane. The catalysed reaction is 2 a ubiquinol + O2 = 2 a ubiquinone + 2 H2O. Functionally, acts early in chloroplast biogenesis as a component of a redox chain responsible for phytoene desaturation. Prevents the generation of toxic oxygen radicals and photooxidation of the nascent photosynthetic apparatus. Involved in the differentiation of multiple plastid types, including chloroplasts, amyloplasts, and etioplasts. Might participate in the chloroplast respiratory chain. The protein is Ubiquinol oxidase 4, chloroplastic/chromoplastic (AOX4) of Arabidopsis thaliana (Mouse-ear cress).